Consider the following 451-residue polypeptide: Chromosomal replication initiator protein DnaA (451 aa).

Residues 1 to 73 (MNAHPKEIWE…IRSLQMVTSQ (73 aa)) form a domain I, interacts with DnaA modulators region. The domain II stretch occupies residues 73–112 (QKYNVKFLISSELPEEFLTLDTINEQNIKGSIIVSDEMSA). The domain III, AAA+ region stretch occupies residues 113–329 (MLNPKYTFTS…GALIRIVAFS (217 aa)). Residues Gly157, Gly159, Lys160, and Thr161 each coordinate ATP. The domain IV, binds dsDNA stretch occupies residues 330-451 (SLTNKEISVD…NDLTKRLDQQ (122 aa)).

Belongs to the DnaA family. In terms of assembly, oligomerizes as a right-handed, spiral filament on DNA at oriC.

Its subcellular location is the cytoplasm. Its function is as follows. Plays an essential role in the initiation and regulation of chromosomal replication. ATP-DnaA binds to the origin of replication (oriC) to initiate formation of the DNA replication initiation complex once per cell cycle. Binds the DnaA box (a 9 base pair repeat at the origin) and separates the double-stranded (ds)DNA. Forms a right-handed helical filament on oriC DNA; dsDNA binds to the exterior of the filament while single-stranded (ss)DNA is stabiized in the filament's interior. The ATP-DnaA-oriC complex binds and stabilizes one strand of the AT-rich DNA unwinding element (DUE), permitting loading of DNA polymerase. After initiation quickly degrades to an ADP-DnaA complex that is not apt for DNA replication. Binds acidic phospholipids. This chain is Chromosomal replication initiator protein DnaA, found in Clostridium kluyveri (strain NBRC 12016).